The chain runs to 462 residues: N-myc proto-oncogene protein (462 aa).

The interval 19 to 47 (LEFDSLQPCFYPDEDDFYFGGPDSTPPGE) is interaction with AURKA. The segment at 61–90 (LSPSRAFPEHSPEPSNWATEMLLPEADLWG) is interaction with AURKA and FBXW7. Residues 76 to 85 (NWATEMLLPE) carry the 9aaTAD motif. 3 disordered regions span residues 133–177 (EKLQ…ATLP), 232–290 (AAPA…SNNK), and 332–390 (APSP…LERQ). Low complexity predominate over residues 138-174 (GHGPPGASSSCPAPGVGASSSGGRALGGSASAGRTGA). Residues 257-276 (TLSDSDDEDDEEEDEEEEID) are compositionally biased toward acidic residues. Phosphoserine; by CK2 is present on residues serine 259 and serine 261. Positions 379–431 (ERRRNHNILERQRRNDLRSSFLTLRDHVPELVKNEKAAKVVILKKATEYVHAL) constitute a bHLH domain. A leucine-zipper region spans residues 431–452 (LQANEHQLLLEKEKLQARQQQL).

As to quaternary structure, efficient DNA binding requires dimerization with another bHLH protein. Binds DNA as a heterodimer with MAX. Interacts with KDM5A, KDM5B and HUWE1. Interacts with MYCNOS. Interacts with AURKA; interaction is phospho-independent and triggers AURKA activation; AURKA competes with FBXW7 for binding to unphosphorylated MYCN but not for binding to unphosphorylated MYCN. Interacts with FBXW7; FBXW7 competes with AURKA for binding to unphosphorylated MYCN but not for binding to phosphorylated MYCN. Post-translationally, phosphorylated by GSK3-beta which may promote its degradation. Phosphorylated by AURKA.

It localises to the nucleus. Positively regulates the transcription of MYCNOS in neuroblastoma cells. The sequence is that of N-myc proto-oncogene protein (Mycn) from Rattus norvegicus (Rat).